The sequence spans 476 residues: Adenosylhomocysteinase (476 aa).

Thr-65, Asp-140, and Glu-201 together coordinate substrate. NAD(+) is bound at residue 202–204; sequence TTT. Substrate contacts are provided by Lys-231 and Asp-235. Residues Asn-236, 265-270, Glu-288, Asn-323, 344-346, and Asn-392 each bind NAD(+); these read GYGDVG and IGH.

It belongs to the adenosylhomocysteinase family. The cofactor is NAD(+).

The protein localises to the cytoplasm. It carries out the reaction S-adenosyl-L-homocysteine + H2O = L-homocysteine + adenosine. It participates in amino-acid biosynthesis; L-homocysteine biosynthesis; L-homocysteine from S-adenosyl-L-homocysteine: step 1/1. Its function is as follows. May play a key role in the regulation of the intracellular concentration of adenosylhomocysteine. This Bacteroides thetaiotaomicron (strain ATCC 29148 / DSM 2079 / JCM 5827 / CCUG 10774 / NCTC 10582 / VPI-5482 / E50) protein is Adenosylhomocysteinase.